The sequence spans 338 residues: Aspartate-semialdehyde dehydrogenase (338 aa).

Residues 13–16 (TGNV) and 41–42 (SS) contribute to the NADP(+) site. Arg-101 lines the phosphate pocket. The active-site Acyl-thioester intermediate is Cys-132. Residue Gln-159 coordinates substrate. Residues 162–163 (SG) and Pro-187 contribute to the NADP(+) site. Lys-216 provides a ligand contact to phosphate. Substrate is bound at residue Arg-237. His-244 (proton acceptor) is an active-site residue. NADP(+) is bound at residue Asn-317.

Belongs to the aspartate-semialdehyde dehydrogenase family. As to quaternary structure, homodimer.

It carries out the reaction L-aspartate 4-semialdehyde + phosphate + NADP(+) = 4-phospho-L-aspartate + NADPH + H(+). The protein operates within amino-acid biosynthesis; L-lysine biosynthesis via DAP pathway; (S)-tetrahydrodipicolinate from L-aspartate: step 2/4. It participates in amino-acid biosynthesis; L-methionine biosynthesis via de novo pathway; L-homoserine from L-aspartate: step 2/3. It functions in the pathway amino-acid biosynthesis; L-threonine biosynthesis; L-threonine from L-aspartate: step 2/5. Its function is as follows. Catalyzes the NADPH-dependent formation of L-aspartate-semialdehyde (L-ASA) by the reductive dephosphorylation of L-aspartyl-4-phosphate. The protein is Aspartate-semialdehyde dehydrogenase of Rickettsia conorii (strain ATCC VR-613 / Malish 7).